The primary structure comprises 99 residues: High mobility group protein I (99 aa).

The tract at residues 1–99 (MSDSPVKKGR…ADTEEVNSSD (99 aa)) is disordered. The residue at position 4 (Ser4) is a Phosphoserine; by CDC2 and MAPK. The a.T hook 1 DNA-binding region spans 7–19 (KKGRGRPAKAKPE). Over residues 16 to 46 (AKPEETASPKAAKKEEKKVEEVPKKIEESTK) the composition is skewed to basic and acidic residues. A Phosphoserine; by MAPK modification is found at Ser23. A DNA-binding region (a.T hook 2) is located at residues 54-66 (KKGRGRPSKGDKA). Ser73 carries the post-translational modification Phosphoserine; by PKC. Residues 74-86 (GKGRGRPAKNAKK) constitute a DNA-binding region (a.T hook 3). Over residues 90-99 (ADTEEVNSSD) the composition is skewed to acidic residues.

It belongs to the HMGA family. In terms of processing, phosphorylated in a cell-cycle dependent manner; substantially reduced in cells that have finished proliferating and are differentiated. Phosphorylation at Ser-4 and Ser-23 results in a 10-fold weakening of DNA-binding activity and altered the mode of protein-DNA interaction.

Its subcellular location is the nucleus. The protein localises to the nucleolus. It localises to the chromosome. Its function is as follows. Binds preferentially to the minor groove of A+T rich regions in double-stranded DNA via the second and third DBA-binding domains. It is suggested that these proteins could function in nucleosome phasing and in the 3'-end processing of mRNA transcripts. They are also involved in the transcription regulation of genes containing, or in close proximity to A+T-rich regions. The polypeptide is High mobility group protein I (Chironomus tentans (Midge)).